The sequence spans 359 residues: MAGTTQPSAIDDILAEHAGLEQQLADPALHNDPSAARKAGKRFAELAPIMATYAKLKSAQDDLDAARELAADDSSFAAEVPELEAQVLELDKALTDLLAPRDPHDGDDVVLEVKSGEGGEESALFASDLARMYVRYAERHGWRVEILDATVSDLGGYKDATLSIKSKGDVRDGVWARLKFEGGVHRVQRVPVTESQGRVHTSAAGVLIYPEPEEVEEVQIDETDLRIDVYRSSGKGGQGVNTTDSAVRITHLPTGIVVTCQNERSQLQNKARAMQVLAARLQAAAEEAADAEASAGRQSQVRTVDRSERIRTYNFPENRITDHRIGFKSHNLDAVLDGELDALLDALGKSDREARLAAE.

An N5-methylglutamine modification is found at Q238.

It belongs to the prokaryotic/mitochondrial release factor family. In terms of processing, methylated by PrmC. Methylation increases the termination efficiency of RF1.

The protein resides in the cytoplasm. Its function is as follows. Peptide chain release factor 1 directs the termination of translation in response to the peptide chain termination codons UAG and UAA. The polypeptide is Peptide chain release factor 1 (Rhodococcus jostii (strain RHA1)).